A 340-amino-acid chain; its full sequence is Uroporphyrinogen decarboxylase (340 aa).

Substrate is bound by residues 21–25 (RQAGR), D71, Y148, S203, and H316.

This sequence belongs to the uroporphyrinogen decarboxylase family. Homodimer.

Its subcellular location is the cytoplasm. The catalysed reaction is uroporphyrinogen III + 4 H(+) = coproporphyrinogen III + 4 CO2. The protein operates within porphyrin-containing compound metabolism; protoporphyrin-IX biosynthesis; coproporphyrinogen-III from 5-aminolevulinate: step 4/4. Catalyzes the decarboxylation of four acetate groups of uroporphyrinogen-III to yield coproporphyrinogen-III. This Campylobacter concisus (strain 13826) protein is Uroporphyrinogen decarboxylase.